We begin with the raw amino-acid sequence, 407 residues long: ATP-citrate synthase subunit alpha chain protein 1 (407 aa).

Citrate-binding residues include Asn-327, Thr-329, and Arg-360.

The protein belongs to the succinate/malate CoA ligase beta subunit family. As to quaternary structure, heterooctamer of 4 alpha and 4 beta chains.

The protein localises to the cytoplasm. It localises to the cytosol. The enzyme catalyses oxaloacetate + acetyl-CoA + ADP + phosphate = citrate + ATP + CoA. In terms of biological role, ATP citrate-lyase is the primary enzyme responsible for the synthesis of cytosolic acetyl-CoA, used for the elongation of fatty acids and biosynthesis of isoprenoids, flavonoids and malonated derivatives. May supply substrate to the cytosolic acetyl-CoA carboxylase, which generates the malonyl-CoA used for the synthesis of a multitude of compounds, including very long chain fatty acids and flavonoids. In contrast to all known animal ACL enzymes having a homomeric structure, plant ACLs are composed of alpha and beta chains. The chain is ATP-citrate synthase subunit alpha chain protein 1 (ACLA-1) from Oryza sativa subsp. japonica (Rice).